The following is a 336-amino-acid chain: MKIAIVNDMPMAVEALRRALAFDPSHEVVWVATNGAEAVKYCAELTPDLILMDLIMPVMDGVEATRRIMAESPCAIVIVTVDRQQNVHRVFEAMGHGALDVVDTPALGAGNAQEAAAPLLRKILNIGWLIGQRGSRVRSAPQPLRSGAPRQSLVAIGSSAGGPAALEVLLKGLPKDFAAAIVLVQHVDQVFAAGMAEWLSSASGLEVRLAREGEPPQSGKVLLAGTNHHIRLLKNGTLAYTAEPVNEIYRPSIDVFFESVASFWNGDAVGVLLTGMGRDGAQGLKLMRDQGYLTIAQDQNSSAVYGMPKAAAAIGAASEIRPLDKIAPRLLEIFAK.

The region spanning 2–119 is the Response regulatory domain; sequence KIAIVNDMPM…GNAQEAAAPL (118 aa). 4-aspartylphosphate is present on Asp-53. One can recognise a CheB-type methylesterase domain in the interval 143 to 336; it reads PLRSGAPRQS…APRLLEIFAK (194 aa). Active-site residues include Ser-159, His-186, and Asp-279.

This sequence belongs to the CheB family. Post-translationally, phosphorylated by CheA. Phosphorylation of the N-terminal regulatory domain activates the methylesterase activity.

It is found in the cytoplasm. It carries out the reaction [protein]-L-glutamate 5-O-methyl ester + H2O = L-glutamyl-[protein] + methanol + H(+). The enzyme catalyses L-glutaminyl-[protein] + H2O = L-glutamyl-[protein] + NH4(+). Involved in chemotaxis. Part of a chemotaxis signal transduction system that modulates chemotaxis in response to various stimuli. Catalyzes the demethylation of specific methylglutamate residues introduced into the chemoreceptors (methyl-accepting chemotaxis proteins or MCP) by CheR. Also mediates the irreversible deamidation of specific glutamine residues to glutamic acid. This Pseudomonas fluorescens (strain ATCC BAA-477 / NRRL B-23932 / Pf-5) protein is Protein-glutamate methylesterase/protein-glutamine glutaminase 1.